The following is a 237-amino-acid chain: MIAIPAVDLRGGQCVQLVGGDYEQEQVRLADPLSVARDWSRTGFTRMHIVDLDAATGRGQNHELIRDLLRDSMVPVQVGGGVRDESRIERLIDDGAEWVVVGTRAVEDEDWREEMANRFPGRLIVAADVRERRVVTRGWAETSRLDVIDFVESLRTLPLAGVLVTAVHLEGLMQGTDLPLMEDVAEASAWPVYASGGVTSLEDMRALEHRGLAGAVLGMALYTGVLDARRLAEEYGA.

D8 serves as the catalytic Proton acceptor. D128 acts as the Proton donor in catalysis.

This sequence belongs to the HisA/HisF family.

It localises to the cytoplasm. The catalysed reaction is 1-(5-phospho-beta-D-ribosyl)-5-[(5-phospho-beta-D-ribosylamino)methylideneamino]imidazole-4-carboxamide = 5-[(5-phospho-1-deoxy-D-ribulos-1-ylimino)methylamino]-1-(5-phospho-beta-D-ribosyl)imidazole-4-carboxamide. Its pathway is amino-acid biosynthesis; L-histidine biosynthesis; L-histidine from 5-phospho-alpha-D-ribose 1-diphosphate: step 4/9. This chain is 1-(5-phosphoribosyl)-5-[(5-phosphoribosylamino)methylideneamino] imidazole-4-carboxamide isomerase, found in Gemmatimonas aurantiaca (strain DSM 14586 / JCM 11422 / NBRC 100505 / T-27).